The chain runs to 551 residues: Solute carrier family 22 member 6 (551 aa).

Residues 1 to 23 lie on the Cytoplasmic side of the membrane; the sequence is MAFNDLLKQVGGVGRFQRIQVTL. Residues 24 to 44 traverse the membrane as a helical segment; it reads VVLPLLLMASHNTLQNFTAAI. Over 45 to 135 the chain is Extracellular; that stretch reads PPHHCRPPAH…LVCSHRALRQ (91 aa). Residues asparagine 56, asparagine 92, and asparagine 113 are each glycosylated (N-linked (GlcNAc...) asparagine). Residues 136–156 traverse the membrane as a helical segment; that stretch reads LGQSLYMAGVLIGAMVFGYLA. Residues 157 to 164 lie on the Cytoplasmic side of the membrane; the sequence is DRLGRRKV. The chain crosses the membrane as a helical span at residues 165 to 187; sequence LILNYLQTAVSGTCAAFSPNFTV. At 188 to 195 the chain is on the extracellular side; the sequence is YCTFRLLS. The chain crosses the membrane as a helical span at residues 196-216; sequence GMSLAGIALNCMTLNVEWMPI. Over 217-224 the chain is Cytoplasmic; the sequence is HTRAYVGT. A helical membrane pass occupies residues 225–245; sequence LAGYVYSTGQFLLAGVAYAVP. The Extracellular segment spans residues 246–248; that stretch reads HWR. The helical transmembrane segment at 249–269 threads the bilayer; it reads YLQLLVSVPFFAFFVYSWFFI. Over 270–337 the chain is Cytoplasmic; the sequence is ESARWYSTPG…ELLRCPALRH (68 aa). A helical transmembrane segment spans residues 338-358; the sequence is LFLCLSLLWFATSFAYYGLVM. Residues 359-368 are Extracellular-facing; it reads DLQGFGVSIY. Residues 369-389 form a helical membrane-spanning segment; sequence LIQVIFGAVDLPAKLVCFLVI. At 390–395 the chain is on the cytoplasmic side; the sequence is NSLGRR. Residues 396–416 form a helical membrane-spanning segment; it reads PAQMASLLLAGICILVNGVIP. Residues 417 to 425 are Extracellular-facing; the sequence is RDQSIVRTS. A helical membrane pass occupies residues 426–446; sequence LAVLGKGCLASSFNCIFLYTG. The Cytoplasmic segment spans residues 447 to 484; sequence ELYPTMIRQTGLGMGSTMARVGSIVSPLVSMTSELYPS. Residues 485–505 form a helical membrane-spanning segment; sequence LPLFIYGAVPVAASAATALLP. The Extracellular portion of the chain corresponds to 506-551; it reads ETLGQPLPDTVQDLESRRRGKPRRQQQEQQKQMVPLQASVQEKNGL. Positions 520-551 are disordered; that stretch reads ESRRRGKPRRQQQEQQKQMVPLQASVQEKNGL.

It belongs to the major facilitator (TC 2.A.1) superfamily. Organic cation transporter (TC 2.A.1.19) family. Glycosylated. Glycosylation is necessary for proper targeting of the transporter to the plasma membrane.

The protein resides in the basolateral cell membrane. Its subcellular location is the basal cell membrane. It catalyses the reaction (6R)-L-erythro-5,6,7,8-tetrahydrobiopterin(out) + a dicarboxylate(in) = (6R)-L-erythro-5,6,7,8-tetrahydrobiopterin(in) + a dicarboxylate(out). The catalysed reaction is L-erythro-7,8-dihydrobiopterin(out) + a dicarboxylate(in) = L-erythro-7,8-dihydrobiopterin(in) + a dicarboxylate(out). The enzyme catalyses L-sepiapterin(out) + a dicarboxylate(in) = L-sepiapterin(in) + a dicarboxylate(out). It carries out the reaction prostaglandin F2alpha(out) + a dicarboxylate(in) = prostaglandin F2alpha(in) + a dicarboxylate(out). It catalyses the reaction prostaglandin E2(out) + a dicarboxylate(in) = prostaglandin E2(in) + a dicarboxylate(out). The catalysed reaction is 3',5'-cyclic AMP(out) + a dicarboxylate(in) = 3',5'-cyclic AMP(in) + a dicarboxylate(out). The enzyme catalyses 3',5'-cyclic GMP(out) + a dicarboxylate(in) = 3',5'-cyclic GMP(in) + a dicarboxylate(out). It carries out the reaction urate(out) + a dicarboxylate(in) = urate(in) + a dicarboxylate(out). It catalyses the reaction kynurenate(out) + glutarate(in) = kynurenate(in) + glutarate(out). The catalysed reaction is (indol-3-yl)acetate(out) + a dicarboxylate(in) = (indol-3-yl)acetate(in) + a dicarboxylate(out). The enzyme catalyses indoxyl sulfate(out) + a dicarboxylate(in) = indoxyl sulfate(in) + a dicarboxylate(out). It carries out the reaction N-benzoylglycine(out) + a dicarboxylate(in) = N-benzoylglycine(in) + a dicarboxylate(out). It catalyses the reaction 3-carboxy-4-methyl-5-propyl-2-furanpropanoate(out) + a dicarboxylate(in) = 3-carboxy-4-methyl-5-propyl-2-furanpropanoate(in) + a dicarboxylate(out). Secondary active transporter that functions as a Na(+)-independent organic anion (OA)/dicarboxylate antiporter where the uptake of one molecule of OA into the cell is coupled with an efflux of one molecule of intracellular dicarboxylate such as 2-oxoglutarate or glutarate. Mediates the uptake of OA across the basolateral side of proximal tubule epithelial cells, thereby contributing to the renal elimination of endogenous OA from the systemic circulation into the urine. Functions as a biopterin transporters involved in the uptake and the secretion of coenzymes tetrahydrobiopterin (BH4), dihydrobiopterin (BH2) and sepiapterin to urine, thereby determining baseline levels of blood biopterins. Transports prostaglandin E2 (PGE2) and prostaglandin F2-alpha (PGF2-alpha) and may contribute to their renal excretion. Also mediates the uptake of cyclic nucleotides such as cAMP and cGMP. Involved in the transport of neuroactive tryptophan metabolites kynurenate (KYNA) and xanthurenate (XA) and may contribute to their secretion from the brain. May transport glutamate. Also involved in the disposition of uremic toxins and potentially toxic xenobiotics by the renal organic anion secretory pathway, helping reduce their undesired toxicological effects on the body. Uremic toxins include the indoxyl sulfate (IS), hippurate/N-benzoylglycine (HA), indole acetate (IA), 3-carboxy-4- methyl-5-propyl-2-furanpropionate (CMPF) and urate. Xenobiotics include the mycotoxin ochratoxin (OTA). May also contribute to the transport of organic compounds in testes across the blood-testis-barrier. May also work as a bidirectional OA/dicarboxylate exchanger. This Oryctolagus cuniculus (Rabbit) protein is Solute carrier family 22 member 6.